We begin with the raw amino-acid sequence, 1650 residues long: Phosphatidylinositol 3,4,5-trisphosphate-dependent Rac exchanger 1 protein (1650 aa).

The segment covering methionine 1–glycine 19 has biased composition (gly residues). Residues methionine 1–alanine 33 are disordered. The DH domain maps to leucine 44–threonine 235. The 122-residue stretch at glutamate 266–glutamate 387 folds into the PH domain. A Phosphoserine modification is found at serine 314. DEP domains follow at residues methionine 416–tyrosine 491 and serine 518–alanine 592. In terms of domain architecture, PDZ spans arginine 620–alanine 698. The segment at alanine 793–alanine 813 is disordered. Residues proline 800 to proline 810 are compositionally biased toward acidic residues. Serine 991 bears the Phosphoserine mark. Disordered stretches follow at residues serine 1022 to serine 1047 and proline 1099 to arginine 1129. Over residues glutamine 1030–serine 1047 the composition is skewed to polar residues. Positions proline 1109–serine 1122 are enriched in low complexity. Serine 1186 and serine 1191 each carry phosphoserine.

As to quaternary structure, interacts preferentially with RAC2. Interacts with RAC1. Interacts with AUTS2.

The protein resides in the cytoplasm. It localises to the cytosol. Its subcellular location is the cell membrane. Its function is as follows. Functions as a RAC guanine nucleotide exchange factor (GEF), which activates the Rac proteins by exchanging bound GDP for free GTP. Its activity is synergistically activated by phosphatidylinositol 3,4,5-trisphosphate and the beta gamma subunits of heterotrimeric G protein. May function downstream of heterotrimeric G proteins in neutrophils. This chain is Phosphatidylinositol 3,4,5-trisphosphate-dependent Rac exchanger 1 protein (Prex1), found in Mus musculus (Mouse).